A 70-amino-acid polypeptide reads, in one-letter code: U-actitoxin-Avd11a (70 aa).

A ShKT domain is found at 36-70 (CNDYKSSSYCRSVGSRNECGIHKYRMYCRKTCGSC). 3 disulfide bridges follow: Cys36/Cys70, Cys45/Cys63, and Cys54/Cys67. The crucial for binding to potassium channels stretch occupies residues 58–59 (KY).

The protein belongs to the sea anemone type 1 potassium channel toxin family. Type 1b subfamily.

It localises to the secreted. Its subcellular location is the nematocyst. Functionally, inhibits voltage-gated potassium channels (Kv1/KCNA). In Anemonia viridis (Snakelocks anemone), this protein is U-actitoxin-Avd11a.